The primary structure comprises 219 residues: uncharacterized protein (219 aa).

Transmembrane regions (helical) follow at residues 14–34 (LVYSFPIVMAYIPVAFTFGVL), 37–57 (TLGFSEVEAMLASLLIFAGAS), 123–143 (FLLGLELGSYSAWVGGTALGV), 155–175 (VYSALVFSISALFLVLLLPNL), and 189–209 (VALAFHLLNLTSVGIIAAALA).

This sequence belongs to the AzlC family.

The protein localises to the cell membrane. This is an uncharacterized protein from Archaeoglobus fulgidus (strain ATCC 49558 / DSM 4304 / JCM 9628 / NBRC 100126 / VC-16).